A 378-amino-acid chain; its full sequence is UDP-N-acetylglucosamine--N-acetylmuramyl-(pentapeptide) pyrophosphoryl-undecaprenol N-acetylglucosamine transferase (378 aa).

Residues 14 to 16 (TGG), Asn-125, Arg-165, Ser-193, and Gln-293 each bind UDP-N-acetyl-alpha-D-glucosamine.

It belongs to the glycosyltransferase 28 family. MurG subfamily.

It localises to the cell inner membrane. It catalyses the reaction di-trans,octa-cis-undecaprenyl diphospho-N-acetyl-alpha-D-muramoyl-L-alanyl-D-glutamyl-meso-2,6-diaminopimeloyl-D-alanyl-D-alanine + UDP-N-acetyl-alpha-D-glucosamine = di-trans,octa-cis-undecaprenyl diphospho-[N-acetyl-alpha-D-glucosaminyl-(1-&gt;4)]-N-acetyl-alpha-D-muramoyl-L-alanyl-D-glutamyl-meso-2,6-diaminopimeloyl-D-alanyl-D-alanine + UDP + H(+). It functions in the pathway cell wall biogenesis; peptidoglycan biosynthesis. In terms of biological role, cell wall formation. Catalyzes the transfer of a GlcNAc subunit on undecaprenyl-pyrophosphoryl-MurNAc-pentapeptide (lipid intermediate I) to form undecaprenyl-pyrophosphoryl-MurNAc-(pentapeptide)GlcNAc (lipid intermediate II). The sequence is that of UDP-N-acetylglucosamine--N-acetylmuramyl-(pentapeptide) pyrophosphoryl-undecaprenol N-acetylglucosamine transferase from Bartonella bacilliformis (strain ATCC 35685 / KC583 / Herrer 020/F12,63).